A 90-amino-acid polypeptide reads, in one-letter code: [Leu8]-phyllolitorin (90 aa).

The signal sequence occupies residues Met1–Cys30. A propeptide spanning residues Lys31–Arg48 is cleaved from the precursor. At Gln49 the chain carries Pyrrolidone carboxylic acid. A Methionine amide modification is found at Met57. The propeptide occupies Ser61 to Asp90.

Belongs to the bombesin/neuromedin-B/ranatensin family. Expressed by the skin glands.

The protein resides in the secreted. This chain is [Leu8]-phyllolitorin, found in Phyllomedusa sauvagei (Sauvage's leaf frog).